Reading from the N-terminus, the 182-residue chain is CASP-like protein 5B1 (182 aa).

The interval 1-20 (GDASHAVDHPIGGHPEHEHD) is disordered. The Cytoplasmic portion of the chain corresponds to 1 to 41 (GDASHAVDHPIGGHPEHEHDLREEEGPLIFPMKDLPGTPGT). A helical membrane pass occupies residues 42-62 (VGGLALRMGQFIFAAASVVIM). At 63–73 (VTSDEFINFTA) the chain is on the extracellular side. Residue asparagine 70 is glycosylated (N-linked (GlcNAc...) asparagine). The chain crosses the membrane as a helical span at residues 74–94 (FCYLAAAMALQFLWSFVLATI). Residues 95-108 (DVYALLIKRGLPNS) are Cytoplasmic-facing. A helical transmembrane segment spans residues 109 to 129 (ILLSLFVVGDWVTATLSLAAA). Topologically, residues 130–159 (CSTAGITVLFDKDLNYCDQMHCRRYQLSAT) are extracellular. Residues 160 to 180 (MAFFSWVLIAISSLITLLLLV) traverse the membrane as a helical segment. Topologically, residues 181–182 (SE) are cytoplasmic.

The protein belongs to the Casparian strip membrane proteins (CASP) family. In terms of assembly, homodimer and heterodimers.

It localises to the cell membrane. The polypeptide is CASP-like protein 5B1 (Picea sitchensis (Sitka spruce)).